The following is a 670-amino-acid chain: MAIVQTLPVPLEPARETATAPQTPAMGSVSSLISGRPCPGGPAPQRHHGVPGPTFFRQQDGLLRGGYEAQEPLCPAVPPRKTVPGNSFTYVNEDFRTESPPSPSSDVEDPREHQAHNAHLRGPPPKLIPVSGKLEKNMEKILIRPTAFKPVLPKPRGAPSLPGFLGPRAAGLSGSQGSLTQLFGGPASSSSSSSSSSAADKPLALSGWASGCPSGTLSDSGRNSLSSLPTYSTGGAEPTANSPGGHLPSHGPGRGPLPGPARGVPTGPSHSDSGRSSSSKSTGSLGARVAGGLLGSGARASPGSSSGGDRSPPPPPPPPPSDEALLHCVLEGKLRDREAELQQLRDSVDESEAAVCQAFGARQRRWPGEREDCASHAQQATQRVQRAQQLLQLQVFQLQQEKRQLQDDFAQLLQEREQLERRCATFEREQQELGPRLEETKWEVCQKSGEISLLKQQLKESQAELVQKGSELVALRVALREARAALRVSEGHARGLQEAARARELELEACSQELQRYRQEAEQLREKARHLDAEAAGLREPPVPPATTDPFLLAESDEAKVQRAAAGTGGSLRAQVERLRQELQREQRRGDEQRNSFEGERLAWQAEKEQVIRYQKQLQHNYVQMYRRNRQLEQELQQLSLELEARELADLGLSEPAPCICLEEITATEI.

Disordered regions lie at residues 1 to 52, 92 to 131, and 150 to 323; these read MAIV…GVPG, NEDFRTESPPSPSSDVEDPREHQAHNAHLRGPPPKLIPVS, and PVLP…PSDE. The tract at residues 1-333 is required for centrosomal localization; that stretch reads MAIVQTLPVP…ALLHCVLEGK (333 aa). Positions 187–199 are enriched in low complexity; that stretch reads ASSSSSSSSSSAA. Positions 213-233 are enriched in polar residues; sequence PSGTLSDSGRNSLSSLPTYST. 2 stretches are compositionally biased toward low complexity: residues 242–251 and 260–310; these read SPGGHLPSHG and PARG…GGDR. S249 and S296 each carry phosphoserine. Residues 311–321 are compositionally biased toward pro residues; the sequence is SPPPPPPPPPS. Residues 329–650 adopt a coiled-coil conformation; sequence VLEGKLRDRE…LELEARELAD (322 aa). The tract at residues 448 to 670 is sufficient for interaction with CTNNB1; that stretch reads SGEISLLKQQ…CLEEITATEI (223 aa). The segment at 451 to 670 is sufficient for interaction with KATNB1 and for inhibition of katanin-mediated microtubule severing; the sequence is ISLLKQQLKE…CLEEITATEI (220 aa). S571 is subject to Phosphoserine. A Nuclear export signal motif is present at residues 632-641; the sequence is LEQELQQLSL.

Belongs to the LZTS2 family. Interacts with CTNNB1. Interacts with KATNB1. Also interacts with gamma-tubulin and KIF23.

The protein resides in the cytoplasm. The protein localises to the cytoskeleton. Its subcellular location is the microtubule organizing center. It localises to the centrosome. Its function is as follows. Negative regulator of katanin-mediated microtubule severing and release from the centrosome. Required for central spindle formation and the completion of cytokinesis. May negatively regulate axonal outgrowth by preventing the formation of microtubule bundles that are necessary for transport within the elongating axon. Negative regulator of the Wnt signaling pathway. Represses beta-catenin-mediated transcriptional activation by promoting the nuclear exclusion of beta-catenin. The protein is Leucine zipper putative tumor suppressor 2 (Lzts2) of Rattus norvegicus (Rat).